Reading from the N-terminus, the 91-residue chain is DNA-directed RNA polymerase subunit omega (91 aa).

This sequence belongs to the RNA polymerase subunit omega family. In terms of assembly, the RNAP catalytic core consists of 2 alpha, 1 beta, 1 beta' and 1 omega subunit. When a sigma factor is associated with the core the holoenzyme is formed, which can initiate transcription.

The enzyme catalyses RNA(n) + a ribonucleoside 5'-triphosphate = RNA(n+1) + diphosphate. Functionally, promotes RNA polymerase assembly. Latches the N- and C-terminal regions of the beta' subunit thereby facilitating its interaction with the beta and alpha subunits. The sequence is that of DNA-directed RNA polymerase subunit omega from Erwinia tasmaniensis (strain DSM 17950 / CFBP 7177 / CIP 109463 / NCPPB 4357 / Et1/99).